The following is a 127-amino-acid chain: UPF0102 protein NFA_41430 (127 aa).

Belongs to the UPF0102 family.

The chain is UPF0102 protein NFA_41430 from Nocardia farcinica (strain IFM 10152).